A 242-amino-acid chain; its full sequence is Endothelial protein C receptor (242 aa).

Residues 1-17 form the signal peptide; sequence MLTKFLPLLLLLLPGCA. Over 18–214 the chain is Extracellular; sequence LCNSDGSQSL…GSQTGRSYTS (197 aa). Residues asparagine 46, asparagine 63, asparagine 140, asparagine 166, and asparagine 176 are each glycosylated (N-linked (GlcNAc...) asparagine). Disulfide bonds link cysteine 119–cysteine 190 and cysteine 223–cysteine 236. A helical transmembrane segment spans residues 215-235; it reads LVLGILMGCFIIAGVAVGIFM. Residues 236-242 lie on the Cytoplasmic side of the membrane; sequence CTSGRRC.

Expressed in endothelial cells.

It is found in the membrane. In terms of biological role, binds activated protein C. Enhances protein C activation by the thrombin-thrombomodulin complex; plays a role in the protein C pathway controlling blood coagulation. The protein is Endothelial protein C receptor (Procr) of Mus musculus (Mouse).